A 337-amino-acid polypeptide reads, in one-letter code: Anthranilate phosphoribosyltransferase (337 aa).

Residues Gly82, 85-86 (GD), Thr90, 92-95 (NIST), 110-118 (KHGGRSVSS), and Ser122 each bind 5-phospho-alpha-D-ribose 1-diphosphate. Position 82 (Gly82) interacts with anthranilate. Residue Ser94 coordinates Mg(2+). Position 168 (Arg168) interacts with anthranilate. Residues Asp226 and Glu227 each coordinate Mg(2+).

The protein belongs to the anthranilate phosphoribosyltransferase family. As to quaternary structure, homodimer. It depends on Mg(2+) as a cofactor.

The enzyme catalyses N-(5-phospho-beta-D-ribosyl)anthranilate + diphosphate = 5-phospho-alpha-D-ribose 1-diphosphate + anthranilate. It functions in the pathway amino-acid biosynthesis; L-tryptophan biosynthesis; L-tryptophan from chorismate: step 2/5. Functionally, catalyzes the transfer of the phosphoribosyl group of 5-phosphorylribose-1-pyrophosphate (PRPP) to anthranilate to yield N-(5'-phosphoribosyl)-anthranilate (PRA). The sequence is that of Anthranilate phosphoribosyltransferase from Francisella tularensis subsp. holarctica (strain OSU18).